Consider the following 85-residue polypeptide: Cell division topological specificity factor (85 aa).

This sequence belongs to the MinE family.

Functionally, prevents the cell division inhibition by proteins MinC and MinD at internal division sites while permitting inhibition at polar sites. This ensures cell division at the proper site by restricting the formation of a division septum at the midpoint of the long axis of the cell. The protein is Cell division topological specificity factor of Shewanella oneidensis (strain ATCC 700550 / JCM 31522 / CIP 106686 / LMG 19005 / NCIMB 14063 / MR-1).